Consider the following 501-residue polypeptide: MAATSEGPLFAASIEKTWGSVVRSPEGTPQKVRELIDEGIVPEEGGTEPKDTAATFQSVDGSPQAEQSPLESTSKEAFFHRVETFSSLKWAGKPPELSPLICAKYGWVTVECDMLKCSSCQAFLCASLQPTFDFGRYKERCAELKKSLCSAHEKFCFWPDSPSPDRFGMLPLGEPAVLISEFLDRFQSLCHLDLQLPSLRPEDLKTMCLTEDAVSALLHLLEDELDFHADDRKTTSKLGSDVQVQATACVLSLCGWACSSLEPTQLSLITCYQCMRKVGLWGFQQIESSMTDLEASFGLTSSPIPGVEGRPEHFPLVPESPRRMMTRSQDATVSPGSEQSEKSPGPIVSRTRSWESSSPVDRPELEAASPTTRSRPVTRSMGTGDSAGVEVPSSPLRRTKRARLCSSSSSDTSPRSFFDPTSQHRDWCPWVNITLVKETKENGETEVDACTPAEPGWKAVLTILLAHKRSNQPAETDSMSLSEKSRKVFRIFRQWESSSSS.

Ala-2 carries the post-translational modification N-acetylalanine. The segment at 21 to 73 (VVRSPEGTPQKVRELIDEGIVPEEGGTEPKDTAATFQSVDGSPQAEQSPLEST) is disordered. Ser-24 carries the post-translational modification Phosphoserine. The residue at position 28 (Thr-28) is a Phosphothreonine. Polar residues predominate over residues 54-72 (ATFQSVDGSPQAEQSPLES). Phosphoserine is present on residues Ser-58, Ser-62, and Ser-68. Thr-84 bears the Phosphothreonine mark. The segment at 102-156 (CAKYGWVTVECDMLKCSSCQAFLCASLQPTFDFGRYKERCAELKKSLCSAHEKFC) adopts a C3HC-type zinc-finger fold. Residues 302–421 (SPIPGVEGRP…TSPRSFFDPT (120 aa)) form a disordered region. A phosphoserine mark is found at Ser-320 and Ser-328. Residues 326-338 (TRSQDATVSPGSE) show a composition bias toward polar residues. Thr-332 bears the Phosphothreonine mark. A phosphoserine mark is found at Ser-334, Ser-337, Ser-343, Ser-353, Ser-358, Ser-369, and Ser-380. Composition is skewed to polar residues over residues 350–359 (RTRSWESSSP) and 369–383 (SPTTRSRPVTRSMGT). At Thr-383 the chain carries Phosphothreonine. A Phosphoserine modification is found at Ser-394. Residues 395 to 401 (PLRRTKR) carry the Nuclear localization signal motif. Ser-406 and Ser-482 each carry phosphoserine. Low complexity predominate over residues 406-420 (SSSSSDTSPRSFFDP).

Interacts with TPR; this interaction mediates ZC3HC1 nuclear envelopes (NE)-association but also required for proper positioning of a substantial amount of TPR at the nuclear basket (NB). Phosphorylated. May also be weakly phosphorylated on Tyr residues.

Its subcellular location is the nucleus. The protein resides in the nucleus envelope. Functionally, required for proper positioning of a substantial amount of TPR at the nuclear basket (NB) through interaction with TPR. The polypeptide is Zinc finger C3HC-type protein 1 (Zc3hc1) (Mus musculus (Mouse)).